Consider the following 205-residue polypeptide: ATP synthase subunit b (205 aa).

Positions 1-27 are cleaved as a signal peptide; that stretch reads MKLNKKHLVAILSVLSLSIIVVPLLTS. Cys-28 carries N-palmitoyl cysteine lipidation. A lipid anchor (S-diacylglycerol cysteine) is attached at Cys-28. A helical membrane pass occupies residues 48-68; the sequence is VWVFIAQVIAMCVVFSLVLWL.

The protein belongs to the ATPase B chain family. As to quaternary structure, F-type ATPases have 2 components, F(1) - the catalytic core - and F(0) - the membrane proton channel. F(1) has five subunits: alpha(3), beta(3), gamma(1), delta(1), epsilon(1). F(0) has three main subunits: a(1), b(2) and c(10-14). The alpha and beta chains form an alternating ring which encloses part of the gamma chain. F(1) is attached to F(0) by a central stalk formed by the gamma and epsilon chains, while a peripheral stalk is formed by the delta and b chains.

The protein resides in the cell membrane. In terms of biological role, f(1)F(0) ATP synthase produces ATP from ADP in the presence of a proton or sodium gradient. F-type ATPases consist of two structural domains, F(1) containing the extramembraneous catalytic core and F(0) containing the membrane proton channel, linked together by a central stalk and a peripheral stalk. During catalysis, ATP synthesis in the catalytic domain of F(1) is coupled via a rotary mechanism of the central stalk subunits to proton translocation. Component of the F(0) channel, it forms part of the peripheral stalk, linking F(1) to F(0). The polypeptide is ATP synthase subunit b (Ureaplasma parvum serovar 3 (strain ATCC 27815 / 27 / NCTC 11736)).